The following is a 506-amino-acid chain: BTB/POZ domain and ankyrin repeat-containing protein NPR5 (506 aa).

The 109-residue stretch at 23–131 (SDVTFSVEGR…LYSGQVSLVP (109 aa)) folds into the BTB domain. A C2HC NPR-type zinc finger spans residues 137 to 151 (RPGCGERGCWHTHCA). The Zn(2+) site is built by C140, C145, H147, and C150. ANK repeat units follow at residues 278–306 (HKIR…GLNL), 307–337 (DDAL…DVNH), 342–371 (AGKT…DPNV), and 375–409 (DGVT…KLRL). The interval 481–506 (KMNDGGDGDDGGSRGPSSLFSPHGFP) is disordered.

This sequence belongs to the plant 'ANKYRIN-BTB/POZ' family. 'NOOT-BOP-COCH-like' (NBCL) subfamily. As to quaternary structure, homodimer. Interacts with TGAL5, TGAL7, TGAL8 and TGAL11.

It is found in the nucleus. The protein localises to the cytoplasm. The protein operates within protein modification; protein ubiquitination. May act as a substrate-specific adapter of an E3 ubiquitin-protein ligase complex (CUL3-RBX1-BTB) which mediates the ubiquitination and subsequent proteasomal degradation of target proteins. Transcriptional co-regulator involved in the promotion of leaf and floral meristem fate and determinacy. Required for the abscission of senescent organs, probably by regulating the cell wall disorganization in abscission zones (AZs, e.g. pulvini at the base of leaves). Maybe involved in defense response against pathogens. The chain is BTB/POZ domain and ankyrin repeat-containing protein NPR5 from Oryza sativa subsp. japonica (Rice).